Here is a 257-residue protein sequence, read N- to C-terminus: Enterotoxin type A (257 aa).

The N-terminal stretch at 1 to 24 (MKKTAFTLLLFIALTLTTSPLVNG) is a signal peptide. C120 and C130 are disulfide-bonded. Zn(2+) contacts are provided by H211, H249, and D251.

It belongs to the staphylococcal/streptococcal toxin family. As to quaternary structure, monomer. Interacts with MHC class II molecules alpha/HLA-DRB1 and beta/HLA-DRA chains. The interaction with MHC-II molecules occurs at both zinc-dependent and zinc-independent sites. Interacts with T-cell receptor beta variable 7-9/TRBV7-9. Zn(2+) is required as a cofactor.

It is found in the secreted. Staphylococcal enterotoxin that activates the host immune system by binding as unprocessed molecules to major histocompatibility (MHC) complex class II and T-cell receptor (TCR) molecules. In turn, waves of cellular activation, cytokine production, and migration into the lung tissue and airways occur via alphabeta T-cells. Also causes the intoxication staphylococcal food poisoning syndrome. The illness is characterized by high fever, hypotension, diarrhea, shock, and in some cases death. The polypeptide is Enterotoxin type A (entA) (Staphylococcus aureus).